Consider the following 1956-residue polypeptide: MSFKEAKPGERGKNPEDHGRKQTASWINGMEAGNQPSTSGEKKSHHWRSYKLIIDPALRKGQHKLYRYDGLSFSMPNSGVPPVDSVRDPRIGRIWTKTKELDLPVPKLKIDEFYVGPVPPKQVTFAKLNDNIRENFLGDMCKKYGEVEEVEILYNPKNKKHLGIAKVIFASVKGARDAVKHLHNTSVMGNIIHVELDTKGETRMRFYDLLVNGFYTPQTLPVGSDLDASPTVNETPQVVESVKRTKETAIGPSVTPNSSTPFSHDTAYSSSRQGTPNSYSQFTPQSQGTPHTPRLGTPFSQDSSYSSRQTTPAFHYGQDSGFKPRRHENKFTDAYNRRPGHHYVHSSGSYRGTEHTFNVTRPQPEPVQVPRTPPLSHSSGNYKSAFSPYQGNTVFPQTDESQYPQTSRDMEYRRTGPQTSDSYSDAGCNSASLELKPVKEKPEEPPPPEPDSTTEQKASFSQTPERCETPGTPTLEAELQHNSLDTRIAMLLKEQRTQLHLIAGDQNSDNEIRMEGSPISSSSSQLSPIPPYSSGSRYQDVTPSSRPSSTGLEDISPTPLPDSDDDDEPIPGTASLCQNSRSASPIDQINQSGRKTESLDKKELVAGDETPTSEKMDEGHPSSGEDMEISDDEVTPSPITSAECAITSSSVISSVIPIPPPGFPPLPPPPPPQPGFPMPPPLPPPPPPTHPSVTVPPPPLPAPPGVPPHHILHHPPPYHHFPVMQGEMMNVLGNHWGGMTMSFQMQTQMLSRMMQGQGSYPYHHFMGGSMQFGNQHPYRPFAISAHLTRGQPWPPFPKFDPSVPPPGYEHKKEDPHKATVDGVLQVIVKELKAIMKRDLNRKMVEVVAFRAFDEWWDKKERLAKQSLTPVKSGESKEEDKQKTKEHITSSLLESWNKGEGLGFEGIGLGIGLRGAIRLPSFKVKRKEPPDAALAGDQKRIRPSHSVDDEDEESERDRDISSTASDLSKKDADAVNNRRRPARPLDSEGEEEVESEGDDGETSDKEDSSSEKEDQDDGSVSALSSKKQLYGDKEGDDEDDDTQSSGKEEDLVSEEEDTTSVASSRAEMDSSDESEESSEYESSSDSDEKEEEDDEEEELVFGDDQSEDQDLGQEYEVETDREEDFFRENLSECSSLPKAGDVELEDEMQKVEEDVARQTTQETLHLRKKNLDVPLVESKECKQDTLDKVEKLFAVPMQEEVFKEHEKAPSPMNEEEEYIELQLEPVPLVPEGAAPAAQEPVIIRPLTPTGAFGETGPVLKLEEPKLQVNLTQFATEDEELYPRTPGRDTAAHSDTEVTFQPGLKVAPSSLPFLPSHNKEEECLLPPEKHAGHLTVTKMLSEEDLPRTPGRDIVVKSSHLGKSQSTETVPATPGSDAPLTGSSLTLTSPHIPGSPFSYLSQSPGIINSGIPRTPGRDFNFTPTFPESNSIFPCHPSGKKPSVDEPDEKSFKEPTSASLTMNSVPSPIPFASPPRGLPHMDIRLGADDLESSDTPAYLSDKLLSEESECEFTKVHLTSTDESAPSPPLPPAEKRKGDRSKKPLSAHEFETEKNYETSSAVAMSEGALGKQMFIGQPDAVSGIKDPAAVPLDFRNDSLSENTVHEPIIQKVPLKELENQWNEVLKEEEDITKHKKSRNSRHNNRYDEFSTVPSPEFSPPRAMFKPRSEFEEMTILYDIWNGGIDDEDIKYMCITYDRLLQQDNGMDWLNDTLWVYHPSTSVYSPKKKKRDDGLREHVTGCARSEGYYKIDKKDKLKYLINNRSLTEELPIDTQGKSIPAQPQASTRAGSERRSEQRRLLSSFTGSCDSDLLKFNQLKFRKKKLRFCKSHIHDWGLFAMEPIIADEMVIEYVGQNIRQVIADMREKRYEDEGIGSSYMFRVDHDTIIDATKCGNFARFINHSCNPNCYAKVITVESQKKIVIYSKQYINVNEEITYDYKFPIEDVKIPCLCGAENCRGTLN.

Positions 1 to 20 (MSFKEAKPGERGKNPEDHGR) are enriched in basic and acidic residues. The disordered stretch occupies residues 1–46 (MSFKEAKPGERGKNPEDHGRKQTASWINGMEAGNQPSTSGEKKSHH). Residues 111-199 (DEFYVGPVPP…NIIHVELDTK (89 aa)) form the RRM domain. Disordered regions lie at residues 226–478 (LDAS…LEAE), 502–637 (IAGD…VTPS), 662–696 (GFPP…VTVP), 926–1148 (KEPP…DEMQ), 1341–1386 (EDLP…TLTS), 1420–1464 (PTFP…VPSP), 1512–1553 (HLTS…NYET), 1627–1655 (TKHK…FSPP), and 1766–1790 (IDTQ…RRSE). Polar residues-rich tracts occupy residues 254–290 (VTPN…QGTP), 298–312 (PFSQ…QTTP), and 346–361 (SSGS…NVTR). A compositionally biased stretch (pro residues) spans 363-373 (QPEPVQVPRTP). Polar residues-rich tracts occupy residues 375-407 (LSHS…PQTS), 416-432 (GPQT…NSAS), and 451-464 (DSTT…SQTP). Positions 517–527 (SPISSSSSQLS) are enriched in low complexity. 2 stretches are compositionally biased toward polar residues: residues 535–551 (GSRY…SSTG) and 575–593 (SLCQ…NQSG). A compositionally biased stretch (basic and acidic residues) spans 594-605 (RKTESLDKKELV). Residues 625–634 (EDMEISDDEV) are compositionally biased toward acidic residues. Acidic residues predominate over residues 986–1000 (SEGEEEVESEGDDGE). Residues 1001-1011 (TSDKEDSSSEK) show a composition bias toward basic and acidic residues. Over residues 1068 to 1122 (DSSDESEESSEYESSSDSDEKEEEDDEEEELVFGDDQSEDQDLGQEYEVETDREE) the composition is skewed to acidic residues. The span at 1341 to 1352 (EDLPRTPGRDIV) shows a compositional bias: basic and acidic residues. 2 stretches are compositionally biased toward polar residues: residues 1358–1367 (LGKSQSTETV) and 1450–1462 (EPTS…NSVP). A compositionally biased stretch (basic and acidic residues) spans 1541 to 1551 (SAHEFETEKNY). The segment covering 1628–1638 (KHKKSRNSRHN) has biased composition (basic residues). Residues 1769–1783 (QGKSIPAQPQASTRA) are compositionally biased toward polar residues. Positions 1788 to 1793 (RSEQRR) match the RxxxRR motif motif. The region spanning 1817 to 1934 (KKLRFCKSHI…VNEEITYDYK (118 aa)) is the SET domain. Tyr1933 is an S-adenosyl-L-methionine binding site. Positions 1940-1956 (VKIPCLCGAENCRGTLN) constitute a Post-SET domain.

This sequence belongs to the class V-like SAM-binding methyltransferase superfamily. Component of the SET1B/COMPASS complex.

It is found in the nucleus speckle. It localises to the chromosome. The catalysed reaction is L-lysyl(4)-[histone H3] + 3 S-adenosyl-L-methionine = N(6),N(6),N(6)-trimethyl-L-lysyl(4)-[histone H3] + 3 S-adenosyl-L-homocysteine + 3 H(+). Histone methyltransferase that specifically methylates 'Lys-4' of histone H3, when part of the SET1 histone methyltransferase (HMT) complex, but not if the neighboring 'Lys-9' residue is already methylated. H3 'Lys-4' methylation represents a specific tag for epigenetic transcriptional activation. The chain is Histone-lysine N-methyltransferase SETD1B (setd1b) from Xenopus tropicalis (Western clawed frog).